A 422-amino-acid polypeptide reads, in one-letter code: MACRSCVVGFSSLSSCEVTPAGSPRPATAGWSSCGPPEPGLSSHSLTGCWTAGTVSKVTVNPSLLVPLDLKVDPAIQQQKNNEKEEMKVLNDKFASLIGKVQALEQRNQLLETRWHFLQSQDSATFDLGHLYEEYQGRLQEELRKVSKERGQLEANLLQVLEKVEDFRIRYEDEISKRTDMEFTFVQLKKDLDAECLRRTELETKLKGLQSFVELMKSIYEQELKDLAAQLKDVSVTVGMDSRCHIDLSGIVEEVKAQYDAVAARSLEEAEAYSRSQLEERAACSAEFENSLQSSRSEIADLNVRIQKLRSQILSIKSHCLKLEENIKVAEEQGELAFQDAKAKLAQLEDALQQAKKDMARQLREYQELMNTKLALDIEIATYRKLMEGEESRMDMPSATVVSAVQARCRTAPTLPHPLCSL.

The tract at residues 1–82 (MACRSCVVGF…DPAIQQQKNN (82 aa)) is head. At S45 the chain carries Phosphoserine. Positions 83–118 (EKEEMKVLNDKFASLIGKVQALEQRNQLLETRWHFL) are coil 1A. Residues 83 to 394 (EKEEMKVLND…KLMEGEESRM (312 aa)) form the IF rod domain. Residues 119-135 (QSQDSATFDLGHLYEEY) form a linker 1 region. Positions 136–227 (QGRLQEELRK…SIYEQELKDL (92 aa)) are coil 1B. The tract at residues 228–251 (AAQLKDVSVTVGMDSRCHIDLSGI) is linker 12. The segment at 252-390 (VEEVKAQYDA…ATYRKLMEGE (139 aa)) is coil 2. The tract at residues 391-422 (ESRMDMPSATVVSAVQARCRTAPTLPHPLCSL) is tail.

The protein belongs to the intermediate filament family. Heterotetramer of two type I and two type II keratins.

The sequence is that of Keratin, type II cytoskeletal 80 (KRT80) from Bos taurus (Bovine).